The sequence spans 83 residues: Sulfur carrier protein TusA (83 aa).

Cysteine 20 acts as the Cysteine persulfide intermediate in catalysis.

The protein belongs to the sulfur carrier protein TusA family.

The protein resides in the cytoplasm. In terms of biological role, sulfur carrier protein which probably makes part of a sulfur-relay system. The chain is Sulfur carrier protein TusA from Pseudomonas fluorescens (strain SBW25).